The following is a 346-amino-acid chain: 4-hydroxy-2-oxovalerate aldolase (346 aa).

Residues 8–260 (VTVHDMTLRD…ETGVDVFKIQ (253 aa)) enclose the Pyruvate carboxyltransferase domain. 16 to 17 (RD) is a substrate binding site. Residue Asp17 participates in Mn(2+) binding. His20 functions as the Proton acceptor in the catalytic mechanism. Substrate-binding residues include Ser170 and His199. Positions 199 and 201 each coordinate Mn(2+). Substrate is bound at residue Tyr290.

This sequence belongs to the 4-hydroxy-2-oxovalerate aldolase family.

It carries out the reaction (S)-4-hydroxy-2-oxopentanoate = acetaldehyde + pyruvate. This Polaromonas naphthalenivorans (strain CJ2) protein is 4-hydroxy-2-oxovalerate aldolase.